Here is a 78-residue protein sequence, read N- to C-terminus: D-alanyl carrier protein (78 aa).

The 78-residue stretch at 1 to 78 (MDVENTVVEI…KIIAKAKELQ (78 aa)) folds into the Carrier domain. Ser36 carries the O-(pantetheine 4'-phosphoryl)serine modification.

Belongs to the DltC family. Post-translationally, 4'-phosphopantetheine is transferred from CoA to a specific serine of apo-DCP.

It is found in the cytoplasm. Its pathway is cell wall biogenesis; lipoteichoic acid biosynthesis. Functionally, carrier protein involved in the D-alanylation of lipoteichoic acid (LTA). The loading of thioester-linked D-alanine onto DltC is catalyzed by D-alanine--D-alanyl carrier protein ligase DltA. The DltC-carried D-alanyl group is further transferred to cell membrane phosphatidylglycerol (PG) by forming an ester bond, probably catalyzed by DltD. D-alanylation of LTA plays an important role in modulating the properties of the cell wall in Gram-positive bacteria, influencing the net charge of the cell wall. This is D-alanyl carrier protein from Latilactobacillus sakei subsp. sakei (strain 23K) (Lactobacillus sakei subsp. sakei).